A 360-amino-acid polypeptide reads, in one-letter code: Glutamate 5-kinase (360 aa).

Residue lysine 7 coordinates ATP. Positions 47, 134, and 146 each coordinate substrate. ATP is bound by residues 166–167 and 210–216; these read TD and TGGISTK. The region spanning 275-356 is the PUA domain; sequence VGKITLDDGA…SSIIVVHRDV (82 aa).

This sequence belongs to the glutamate 5-kinase family.

The protein localises to the cytoplasm. It catalyses the reaction L-glutamate + ATP = L-glutamyl 5-phosphate + ADP. It functions in the pathway amino-acid biosynthesis; L-proline biosynthesis; L-glutamate 5-semialdehyde from L-glutamate: step 1/2. Catalyzes the transfer of a phosphate group to glutamate to form L-glutamate 5-phosphate. The chain is Glutamate 5-kinase from Prochlorococcus marinus (strain AS9601).